Here is a 353-residue protein sequence, read N- to C-terminus: D-alanine--D-alanine ligase (353 aa).

One can recognise an ATP-grasp domain in the interval 135–344 (KMVFAQAGLA…FPQLVDRLVQ (210 aa)). Residue 171 to 226 (EAQLDYPMFVKPANLGSSVGISKVRTRDELEKALDLAAEYDRRLIVEAGVTAREVE) coordinates ATP. Asp297, Glu311, and Asn313 together coordinate Mg(2+).

Belongs to the D-alanine--D-alanine ligase family. Requires Mg(2+) as cofactor. Mn(2+) serves as cofactor.

It localises to the cytoplasm. It catalyses the reaction 2 D-alanine + ATP = D-alanyl-D-alanine + ADP + phosphate + H(+). It participates in cell wall biogenesis; peptidoglycan biosynthesis. Functionally, cell wall formation. This is D-alanine--D-alanine ligase from Picosynechococcus sp. (strain ATCC 27264 / PCC 7002 / PR-6) (Agmenellum quadruplicatum).